The sequence spans 360 residues: Peptide chain release factor 1 (360 aa).

Residue Gln-234 is modified to N5-methylglutamine.

The protein belongs to the prokaryotic/mitochondrial release factor family. Post-translationally, methylated by PrmC. Methylation increases the termination efficiency of RF1.

It localises to the cytoplasm. Its function is as follows. Peptide chain release factor 1 directs the termination of translation in response to the peptide chain termination codons UAG and UAA. This Clostridium botulinum (strain Alaska E43 / Type E3) protein is Peptide chain release factor 1.